A 157-amino-acid chain; its full sequence is tRNA (cytidine(34)-2'-O)-methyltransferase (157 aa).

S-adenosyl-L-methionine is bound by residues Leu-78, Gly-100, Ile-122, and Ser-130.

The protein belongs to the class IV-like SAM-binding methyltransferase superfamily. RNA methyltransferase TrmH family. TrmL subfamily. Homodimer.

Its subcellular location is the cytoplasm. The catalysed reaction is cytidine(34) in tRNA + S-adenosyl-L-methionine = 2'-O-methylcytidine(34) in tRNA + S-adenosyl-L-homocysteine + H(+). It catalyses the reaction 5-carboxymethylaminomethyluridine(34) in tRNA(Leu) + S-adenosyl-L-methionine = 5-carboxymethylaminomethyl-2'-O-methyluridine(34) in tRNA(Leu) + S-adenosyl-L-homocysteine + H(+). Its function is as follows. Methylates the ribose at the nucleotide 34 wobble position in the two leucyl isoacceptors tRNA(Leu)(CmAA) and tRNA(Leu)(cmnm5UmAA). Catalyzes the methyl transfer from S-adenosyl-L-methionine to the 2'-OH of the wobble nucleotide. The protein is tRNA (cytidine(34)-2'-O)-methyltransferase of Escherichia coli O6:H1 (strain CFT073 / ATCC 700928 / UPEC).